The chain runs to 416 residues: Serine/threonine transporter SstT (416 aa).

Transmembrane regions (helical) follow at residues 15 to 35 (SLVS…MFMP), 49 to 69 (VGAL…AAII), 82 to 102 (ILLL…VASF), 141 to 161 (ALLD…GIAM), 192 to 212 (LGIL…ALFG), 217 to 237 (LVVL…LIVF), 288 to 308 (VSIP…ITVL), 316 to 336 (LGME…TISA), and 363 to 383 (IAMQ…SAET).

The protein belongs to the dicarboxylate/amino acid:cation symporter (DAACS) (TC 2.A.23) family.

Its subcellular location is the cell inner membrane. It carries out the reaction L-serine(in) + Na(+)(in) = L-serine(out) + Na(+)(out). The catalysed reaction is L-threonine(in) + Na(+)(in) = L-threonine(out) + Na(+)(out). Involved in the import of serine and threonine into the cell, with the concomitant import of sodium (symport system). This Aeromonas hydrophila subsp. hydrophila (strain ATCC 7966 / DSM 30187 / BCRC 13018 / CCUG 14551 / JCM 1027 / KCTC 2358 / NCIMB 9240 / NCTC 8049) protein is Serine/threonine transporter SstT.